The following is a 298-amino-acid chain: Acetyl-coenzyme A carboxylase carboxyl transferase subunit beta (298 aa).

The segment at 1 to 21 (MNQEVKSGKVLSPSTPWTQRP) is disordered. Residues 41-298 (PTIECPECHA…RLVSKLMNLP (258 aa)) form the CoA carboxyltransferase N-terminal domain. Zn(2+) contacts are provided by C45, C48, C64, and C67. The C4-type zinc-finger motif lies at 45 to 67 (CPECHALVTRTAISFNAYVCPQC).

The protein belongs to the AccD/PCCB family. In terms of assembly, acetyl-CoA carboxylase is a heterohexamer composed of biotin carboxyl carrier protein (AccB), biotin carboxylase (AccC) and two subunits each of ACCase subunit alpha (AccA) and ACCase subunit beta (AccD). It depends on Zn(2+) as a cofactor.

The protein resides in the cytoplasm. It carries out the reaction N(6)-carboxybiotinyl-L-lysyl-[protein] + acetyl-CoA = N(6)-biotinyl-L-lysyl-[protein] + malonyl-CoA. It functions in the pathway lipid metabolism; malonyl-CoA biosynthesis; malonyl-CoA from acetyl-CoA: step 1/1. In terms of biological role, component of the acetyl coenzyme A carboxylase (ACC) complex. Biotin carboxylase (BC) catalyzes the carboxylation of biotin on its carrier protein (BCCP) and then the CO(2) group is transferred by the transcarboxylase to acetyl-CoA to form malonyl-CoA. The protein is Acetyl-coenzyme A carboxylase carboxyl transferase subunit beta of Acinetobacter baumannii (strain AYE).